A 433-amino-acid chain; its full sequence is Histidinol dehydrogenase homolog (433 aa).

2 residues coordinate Zn(2+): Gln-249 and His-252. Catalysis depends on proton acceptor residues Glu-319 and His-320. 2 residues coordinate Zn(2+): Asp-353 and His-412.

Belongs to the histidinol dehydrogenase family. Requires Zn(2+) as cofactor.

The polypeptide is Histidinol dehydrogenase homolog (Ruegeria pomeroyi (strain ATCC 700808 / DSM 15171 / DSS-3) (Silicibacter pomeroyi)).